Reading from the N-terminus, the 442-residue chain is FBD-associated F-box protein At1g66310 (442 aa).

Residues 18–64 (VDWLRDLPESLLCHILLNLPTKDVVKTSVLSSKWRNLWRLVPGLDLD) enclose the F-box domain. The 53-residue stretch at 363–415 (KRRTSVLSGPRRLLSSLEYVEIESPLTGEVFEMKLVSYLLENSPILKKLTINL) folds into the FBD domain.

In Arabidopsis thaliana (Mouse-ear cress), this protein is FBD-associated F-box protein At1g66310.